The chain runs to 191 residues: Large ribosomal subunit protein uL22 (191 aa).

A compositionally biased stretch (basic and acidic residues) spans 159–168 (VPKGEDDTAQ). The interval 159–191 (VPKGEDDTAQKKKVSQKKLKKQKLKAALSGGAD) is disordered. A compositionally biased stretch (basic residues) spans 169–182 (KKKVSQKKLKKQKL).

The protein belongs to the universal ribosomal protein uL22 family.

In Suberites domuncula (Sponge), this protein is Large ribosomal subunit protein uL22 (RPL17).